A 317-amino-acid chain; its full sequence is CXXC-type zinc finger protein 5 (317 aa).

Positions 1 to 10 (MSSLGGGSQD) are enriched in gly residues. Residues 1–92 (MSSLGGGSQD…SFGSSGGGGS (92 aa)) are disordered. 2 stretches are compositionally biased toward low complexity: residues 11-27 (AGGS…SGSG) and 36-51 (STAV…VADD). A CXXC-type zinc finger spans residues 251 to 292 (GKKKRKRCGMCAPCRRRINCEQCSSCRNRKTGHQICKFRKCE). The Nuclear localization signal signature appears at 252 to 257 (KKKRKR). Residues Cys258, Cys261, Cys264, Cys270, Cys273, Cys276, Cys286, and Cys291 each coordinate Zn(2+).

Interacts with DVL1. Interacts with RBPJ.

The protein resides in the nucleus. Its subcellular location is the cytoplasm. May indirectly participate in activation of the NF-kappa-B and MAPK pathways. Acts as a mediator of BMP4-mediated modulation of canonical Wnt signaling activity in neural stem cells. Required for DNA damage-induced ATM phosphorylation, p53 activation and cell cycle arrest. Involved in myelopoiesis. Binds to the oxygen responsive element of COX4I2 and represses its transcription under hypoxia conditions (4% oxygen), as well as normoxia conditions (20% oxygen). May repress COX4I2 transactivation induced by CHCHD2 and RBPJ. Binds preferentially to DNA containing cytidine-phosphate-guanosine (CpG) dinucleotides over CpH (H=A, T, and C), hemimethylated-CpG and hemimethylated-hydroxymethyl-CpG. This Mus musculus (Mouse) protein is CXXC-type zinc finger protein 5 (Cxxc5).